We begin with the raw amino-acid sequence, 22 residues long: Thylakoid lumenal 11 kDa protein (22 aa).

The interval 1 to 22 (FKGGGPYGQGVTRGQDLSGKDF) is disordered.

To A.thaliana At2g44920.

The protein resides in the plastid. Its subcellular location is the chloroplast thylakoid lumen. The chain is Thylakoid lumenal 11 kDa protein from Spinacia oleracea (Spinach).